A 606-amino-acid chain; its full sequence is Elongation factor 4 (606 aa).

A tr-type G domain is found at 11 to 193; the sequence is PHIRNFSIIA…RLVRDVPPPK (183 aa). GTP contacts are provided by residues 23–28 and 140–143; these read DHGKST and NKMD.

Belongs to the TRAFAC class translation factor GTPase superfamily. Classic translation factor GTPase family. LepA subfamily.

Its subcellular location is the cell inner membrane. The catalysed reaction is GTP + H2O = GDP + phosphate + H(+). In terms of biological role, required for accurate and efficient protein synthesis under certain stress conditions. May act as a fidelity factor of the translation reaction, by catalyzing a one-codon backward translocation of tRNAs on improperly translocated ribosomes. Back-translocation proceeds from a post-translocation (POST) complex to a pre-translocation (PRE) complex, thus giving elongation factor G a second chance to translocate the tRNAs correctly. Binds to ribosomes in a GTP-dependent manner. In Chromohalobacter salexigens (strain ATCC BAA-138 / DSM 3043 / CIP 106854 / NCIMB 13768 / 1H11), this protein is Elongation factor 4.